Consider the following 83-residue polypeptide: Exodeoxyribonuclease 7 small subunit (83 aa).

It belongs to the XseB family. Heterooligomer composed of large and small subunits.

The protein localises to the cytoplasm. It catalyses the reaction Exonucleolytic cleavage in either 5'- to 3'- or 3'- to 5'-direction to yield nucleoside 5'-phosphates.. In terms of biological role, bidirectionally degrades single-stranded DNA into large acid-insoluble oligonucleotides, which are then degraded further into small acid-soluble oligonucleotides. The polypeptide is Exodeoxyribonuclease 7 small subunit (Rhizobium meliloti (strain 1021) (Ensifer meliloti)).